The following is a 100-amino-acid chain: Small ribosomal subunit protein uS14 (100 aa).

The protein belongs to the universal ribosomal protein uS14 family. In terms of assembly, part of the 30S ribosomal subunit. Contacts proteins S3 and S10.

In terms of biological role, binds 16S rRNA, required for the assembly of 30S particles and may also be responsible for determining the conformation of the 16S rRNA at the A site. The sequence is that of Small ribosomal subunit protein uS14 from Trichodesmium erythraeum (strain IMS101).